We begin with the raw amino-acid sequence, 90 residues long: MKIYKVDKTLVSTNRIAMMEHKPLLVVREKDGGTPQVAVDPVGCKPGDWVICCGSSAARDATGVKGYPSDLTIVGIIDKWEVPQDADTTS.

In terms of domain architecture, BMV spans 1–78 (MKIYKVDKTL…SDLTIVGIID (78 aa)).

The protein belongs to the CcmL/EutN family. CsoS4 subfamily. Homopentamer.

It is found in the carboxysome. Probably forms vertices in the carboxysome, a polyhedral inclusion where RuBisCO (ribulose bisphosphate carboxylase, cbbL-cbbS) is sequestered. Has been modeled to induce curvature upon insertion into an otherwise flat hexagonal layer of major carboxysome subunits. This chain is Carboxysome shell vertex protein CsoS4A, found in Hydrogenovibrio crunogenus (strain DSM 25203 / XCL-2) (Thiomicrospira crunogena).